The primary structure comprises 191 residues: Cytochrome c oxidase subunit 6b-1 (191 aa).

Positions 1–14 are enriched in polar residues; the sequence is MADAVNAQTPSLSE. Residues 1–126 are disordered; that stretch reads MADAVNAQTP…IKLETAPADF (126 aa). An N-acetylalanine modification is found at A2. Basic and acidic residues-rich tracts occupy residues 16–37 and 45–56; these read YHLE…KEVA and EEVKTEQAKEES. Positions 72–98 are enriched in low complexity; it reads APESTEVASEAPAAAEDNAEETPAAAE. Over residues 99-114 the composition is skewed to acidic residues; it reads ENNDENASEEVAEETP. One can recognise a CHCH domain in the interval 134–177; it reads TRHCFTRYVEYHRCVAAKGDDAPECDKFAKFYRSLCPSEWVDRW. A Cx9C motif motif is present at residues 137 to 147; it reads CFTRYVEYHRC. Intrachain disulfides connect C137–C169 and C147–C158. The Cx10C motif signature appears at 158 to 169; the sequence is CDKFAKFYRSLC.

It belongs to the cytochrome c oxidase subunit 6B (TC 3.D.4.8) family. As to expression, expressed in the whole plant.

It is found in the mitochondrion. Functionally, this protein is one of the nuclear-coded polypeptide chains of cytochrome c oxidase, the terminal oxidase in mitochondrial electron transport. This protein may be one of the heme-binding subunits of the oxidase. This Arabidopsis thaliana (Mouse-ear cress) protein is Cytochrome c oxidase subunit 6b-1 (COX6B-1).